The primary structure comprises 218 residues: Large ribosomal subunit protein uL3 (218 aa).

Residues 137 to 157 form a disordered region; it reads GVGASHGAHKNHRKPGSIGGA.

It belongs to the universal ribosomal protein uL3 family. As to quaternary structure, part of the 50S ribosomal subunit. Forms a cluster with proteins L14 and L19.

In terms of biological role, one of the primary rRNA binding proteins, it binds directly near the 3'-end of the 23S rRNA, where it nucleates assembly of the 50S subunit. The polypeptide is Large ribosomal subunit protein uL3 (Kocuria rhizophila (strain ATCC 9341 / DSM 348 / NBRC 103217 / DC2201)).